A 481-amino-acid polypeptide reads, in one-letter code: ATP synthase subunit beta, chloroplastic (481 aa).

Residue 162–169 (GGAGVGKT) coordinates ATP.

Belongs to the ATPase alpha/beta chains family. In terms of assembly, F-type ATPases have 2 components, CF(1) - the catalytic core - and CF(0) - the membrane proton channel. CF(1) has five subunits: alpha(3), beta(3), gamma(1), delta(1), epsilon(1). CF(0) has four main subunits: a(1), b(1), b'(1) and c(9-12).

It localises to the plastid. It is found in the chloroplast thylakoid membrane. It catalyses the reaction ATP + H2O + 4 H(+)(in) = ADP + phosphate + 5 H(+)(out). In terms of biological role, produces ATP from ADP in the presence of a proton gradient across the membrane. The catalytic sites are hosted primarily by the beta subunits. In Chlorella vulgaris (Green alga), this protein is ATP synthase subunit beta, chloroplastic.